The chain runs to 182 residues: Protein GrpE (182 aa).

The tract at residues 1–37 (MSDSSKERKKKFTGMVNKQKSEDQQNNSKQADDLDEL) is disordered.

The protein belongs to the GrpE family. In terms of assembly, homodimer.

It is found in the cytoplasm. Functionally, participates actively in the response to hyperosmotic and heat shock by preventing the aggregation of stress-denatured proteins, in association with DnaK and GrpE. It is the nucleotide exchange factor for DnaK and may function as a thermosensor. Unfolded proteins bind initially to DnaJ; upon interaction with the DnaJ-bound protein, DnaK hydrolyzes its bound ATP, resulting in the formation of a stable complex. GrpE releases ADP from DnaK; ATP binding to DnaK triggers the release of the substrate protein, thus completing the reaction cycle. Several rounds of ATP-dependent interactions between DnaJ, DnaK and GrpE are required for fully efficient folding. The protein is Protein GrpE of Wolbachia sp. subsp. Brugia malayi (strain TRS).